A 230-amino-acid chain; its full sequence is Ribonuclease 3 (230 aa).

The RNase III domain maps to 5-125 (YSRFYNILGY…VIGAIYLDSD (121 aa)). Glu40 provides a ligand contact to Mg(2+). Asp44 is an active-site residue. Residues Asp111 and Glu114 each contribute to the Mg(2+) site. Glu114 is a catalytic residue. The 71-residue stretch at 153–223 (DSKSKLQEIL…AEKMIEMLSQ (71 aa)) folds into the DRBM domain.

This sequence belongs to the ribonuclease III family. As to quaternary structure, homodimer. Requires Mg(2+) as cofactor.

It is found in the cytoplasm. It catalyses the reaction Endonucleolytic cleavage to 5'-phosphomonoester.. Its function is as follows. Digests double-stranded RNA. Involved in the processing of primary rRNA transcript to yield the immediate precursors to the large and small rRNAs (23S and 16S). Processes some mRNAs, and tRNAs when they are encoded in the rRNA operon. Processes pre-crRNA and tracrRNA of type II CRISPR loci if present in the organism. This is Ribonuclease 3 from Francisella tularensis subsp. tularensis (strain FSC 198).